The chain runs to 303 residues: Archaeosortase A (303 aa).

A run of 7 helical transmembrane segments spans residues 3 to 23, 36 to 56, 60 to 80, 93 to 113, 169 to 189, 200 to 220, and 259 to 279; these read GLLS…GAVA, TAAW…FTLV, YIEG…GWLL, AVAA…FTLL, VVLA…IAAV, LAIA…FIAI, and LAVV…PELL. Cys-173 serves as the catalytic Acyl-thioester intermediate. The active-site Proton donor is Arg-214.

It belongs to the exosortase/archaeosortase family. Archaeosortase A subfamily.

The protein localises to the cell membrane. In terms of biological role, transpeptidase that recognizes and modifies its substrate by proteolytic cleavage of a sorting signal. Following cleavage, a covalent intermediate is formed via a thioester bond between the archaeosortase and its substrate, which is then transferred and covalently attached to the cell membrane. This sortase recognizes a tripartite structure consisting of a conserved Pro-Gly-Phe (PGF) motif, followed by a transmembrane alpha helix domain and a cluster of basic residues, usually at the C-terminus of target proteins. Confirmed substrates include the cell surface S-layer glycoprotein Csg and HVO_0405. ArtA is required for the C-terminal processing of Csg and for its lipidation and attachment to the archaeal plasma membrane. It is also required for the processing of HVO_0405, which contains an atypical central tripartite structure. The polypeptide is Archaeosortase A (Haloferax volcanii (strain ATCC 29605 / DSM 3757 / JCM 8879 / NBRC 14742 / NCIMB 2012 / VKM B-1768 / DS2) (Halobacterium volcanii)).